Reading from the N-terminus, the 151-residue chain is Large ribosomal subunit protein uL15 (151 aa).

A disordered region spans residues 1–51 (MKSLRLEDAVPQSGSRHRKLRVGRGHSAGQGKTSGRGMRGQKCRSGGGVRP). Residues 15–24 (SRHRKLRVGR) show a composition bias toward basic residues. A compositionally biased stretch (gly residues) spans 26–38 (HSAGQGKTSGRGM).

It belongs to the universal ribosomal protein uL15 family. Part of the 50S ribosomal subunit.

In terms of biological role, binds to the 23S rRNA. This Gloeobacter violaceus (strain ATCC 29082 / PCC 7421) protein is Large ribosomal subunit protein uL15.